A 234-amino-acid chain; its full sequence is Large ribosomal subunit protein uL1 (234 aa).

Belongs to the universal ribosomal protein uL1 family. As to quaternary structure, part of the 50S ribosomal subunit.

In terms of biological role, binds directly to 23S rRNA. The L1 stalk is quite mobile in the ribosome, and is involved in E site tRNA release. Protein L1 is also a translational repressor protein, it controls the translation of the L11 operon by binding to its mRNA. This chain is Large ribosomal subunit protein uL1, found in Escherichia coli O127:H6 (strain E2348/69 / EPEC).